We begin with the raw amino-acid sequence, 142 residues long: Transcriptional regulator MraZ (142 aa).

SpoVT-AbrB domains follow at residues 5 to 48 (EFEY…PLCE) and 77 to 120 (AFDV…DKET).

The protein belongs to the MraZ family. Forms oligomers.

Its subcellular location is the cytoplasm. The protein localises to the nucleoid. In Dehalococcoides mccartyi (strain ATCC BAA-2266 / KCTC 15142 / 195) (Dehalococcoides ethenogenes (strain 195)), this protein is Transcriptional regulator MraZ.